The following is an 86-amino-acid chain: Antimicrobial peptide 2 (86 aa).

A signal peptide spans 1-25 (MVNMKCVALIVIVMMAFMMVDPSMG). Cystine bridges form between Cys-29-Cys-40, Cys-34-Cys-46, and Cys-39-Cys-53. The Chitin-binding type-1 domain maps to 29–53 (CVRGRCPSGMCCSQFGYCGKGPKYC). Positions 56–86 (ASTTVDHQADVAATKTAKNPTDAKLAGAGSP) are cleaved as a propeptide — removed in mature form.

Homodimer.

Functionally, chitin-binding protein with a defensive function against numerous chitin containing fungal pathogens. It is also a potent inhibitor of Gram-positive bacteria. The polypeptide is Antimicrobial peptide 2 (Amaranthus caudatus (Love-lies-bleeding)).